A 191-amino-acid chain; its full sequence is ECF RNA polymerase sigma-E factor (191 aa).

The segment at 1-153 is binds RNAP core; it reads MSEQLTDQVL…MAITLRELDG (153 aa). The tract at residues 25–92 is sigma-70 factor domain-2; that stretch reads LVVRYQHKVA…KNYLVAQGRR (68 aa). The short motif at 48-61 is the Polymerase core binding element; the sequence is DVVQEAFIKAYRAL. Residues 129-180 are sigma-70 factor domain-4; that stretch reads QIVFRTIESLPEDLRMAITLRELDGLSYEEIAAIMDCPVGTVRSRIFRAREA. Residues 156 to 175 constitute a DNA-binding region (H-T-H motif); it reads YEEIAAIMDCPVGTVRSRIF.

This sequence belongs to the sigma-70 factor family. ECF subfamily. Interacts transiently with the RNAP catalytic core formed by RpoA, RpoB, RpoC and RpoZ (2 alpha, 1 beta, 1 beta' and 1 omega subunit) to form the RNAP holoenzyme that can initiate transcription. Interacts 1:1 with anti-sigma-E factor RseA which prevents binding to RNAP catalytic core.

The protein localises to the cytoplasm. With respect to regulation, ECF sigma-E is held in an inactive form by its cognate anti-sigma factor (RseA) until released by regulated intramembrane proteolysis (RIP). RIP occurs when an extracytoplasmic signal (periplasmic stress and excess LPS) triggers a concerted proteolytic cascade to transmit information and elicit cellular responses. The anti-sigma factor RseA is an inner membrane protein, binding sigma-E in the cytoplasm and RseB in the periplasm. RseA is first cut extracytoplasmically (site-1 protease, S1P, by DegS), then within the membrane itself (site-2 protease, S2P, by RseP), while cytoplasmic proteases (predominantly ClpX-ClpP) finish degrading the regulatory protein, liberating sigma-E. Degradation of RseA requires 2 signals to activate DegS; an outer membrane protein (OMP) signal activates DegS, while an LPS signal causes release of RseB from RseA, freeing RseA to be cleaved. Its function is as follows. Sigma factors are initiation factors that promote the attachment of RNA polymerase (RNAP) to specific initiation sites and are then released. Extracytoplasmic function (ECF) sigma-E controls the envelope stress response, responding to periplasmic protein stress, increased levels of periplasmic lipopolysaccharide (LPS) as well as heat shock and oxidative stress; it controls protein processing in the extracytoplasmic compartment. In Escherichia coli O157:H7, this protein is ECF RNA polymerase sigma-E factor (rpoE).